Reading from the N-terminus, the 154-residue chain is Lipoprotein signal peptidase (154 aa).

2 helical membrane passes run 52-72 (ILAG…IGIV) and 85-105 (LGVA…DRAV). Residues Asp111 and Asp129 contribute to the active site. The helical transmembrane segment at 124–144 (IFNIADSSLCVGVMLLFIQML) threads the bilayer.

This sequence belongs to the peptidase A8 family.

The protein resides in the cell membrane. It carries out the reaction Release of signal peptides from bacterial membrane prolipoproteins. Hydrolyzes -Xaa-Yaa-Zaa-|-(S,diacylglyceryl)Cys-, in which Xaa is hydrophobic (preferably Leu), and Yaa (Ala or Ser) and Zaa (Gly or Ala) have small, neutral side chains.. The protein operates within protein modification; lipoprotein biosynthesis (signal peptide cleavage). Its function is as follows. This protein specifically catalyzes the removal of signal peptides from prolipoproteins. The polypeptide is Lipoprotein signal peptidase (Bacillus subtilis (strain 168)).